We begin with the raw amino-acid sequence, 201 residues long: Twin horsetail protein 2 (201 aa).

Its subcellular location is the nucleus. In terms of biological role, required for correct meiotic chromosome segregation and recombination. This chain is Twin horsetail protein 2 (tht2), found in Schizosaccharomyces pombe (strain 972 / ATCC 24843) (Fission yeast).